The following is a 193-amino-acid chain: Pilin-like protein PilA2 (193 aa).

Positions 1–4 are cleaved as a propeptide — leader sequence; it reads MRKG. Leu-5 carries the N-methylleucine modification. A helical membrane pass occupies residues 5-25; it reads LTLVEVLVTLVIMGIAFAALL.

It localises to the cell inner membrane. The protein localises to the cell outer membrane. The protein resides in the periplasm. Its function is as follows. Plays an essential role in natural DNA transformation but is not required for pilus biogenesis. This Thermus thermophilus (strain ATCC BAA-163 / DSM 7039 / HB27) protein is Pilin-like protein PilA2 (pilA2).